The sequence spans 379 residues: PqqA peptide cyclase (379 aa).

The region spanning 8 to 220 is the Radical SAM core domain; it reads LPAPIGLLAE…IRVVEEARER (213 aa). 3 residues coordinate [4Fe-4S] cluster: Cys22, Cys26, and Cys29.

This sequence belongs to the radical SAM superfamily. PqqE family. In terms of assembly, interacts with PqqD. The interaction is necessary for activity of PqqE. [4Fe-4S] cluster is required as a cofactor.

It catalyses the reaction [PQQ precursor protein] + S-adenosyl-L-methionine = E-Y cross-linked-[PQQ precursor protein] + 5'-deoxyadenosine + L-methionine + H(+). The protein operates within cofactor biosynthesis; pyrroloquinoline quinone biosynthesis. Functionally, catalyzes the cross-linking of a glutamate residue and a tyrosine residue in the PqqA protein as part of the biosynthesis of pyrroloquinoline quinone (PQQ). The polypeptide is PqqA peptide cyclase (Methylobacterium sp. (strain 4-46)).